A 286-amino-acid polypeptide reads, in one-letter code: Meteorin-like protein (286 aa).

A signal peptide spans 1–20 (MLRRGLLSFFMVILIDRGTS). 5 cysteine pairs are disulfide-bonded: Cys-28-Cys-51, Cys-84-Cys-120, Cys-165-Cys-235, Cys-168-Cys-259, and Cys-178-Cys-281. The N-linked (GlcNAc...) asparagine glycan is linked to Asn-203.

The protein belongs to the meteorin family.

Its subcellular location is the secreted. Hormone induced following exercise or cold exposure that promotes energy expenditure. Induced either in the skeletal muscle after exercise or in adipose tissue following cold exposure and is present in the circulation. Able to stimulate energy expenditure associated with the browning of the white fat depots and improves glucose tolerance. In Xenopus laevis (African clawed frog), this protein is Meteorin-like protein (metrnl).